Consider the following 327-residue polypeptide: Vacuolar protein sorting-associated protein 26A (327 aa).

Positions 306–327 are disordered; sequence RTNFHQRFESPESQASAEQPEM. The residue at position 315 (serine 315) is a Phosphoserine. Residues 316–327 are compositionally biased toward polar residues; that stretch reads PESQASAEQPEM.

The protein belongs to the VPS26 family. In terms of assembly, component of the heterotrimeric retromer cargo-selective complex (CSC), also described as vacuolar protein sorting subcomplex (VPS), formed by VPS26 (VPS26A or VPS26B), VPS29 and VPS35. The CSC has a highly elongated structure with VPS26 and VPS29 binding independently at opposite distal ends of VPS35 as central platform. The CSC is believed to associate with variable sorting nexins to form functionally distinct retromer complex variants. The originally described retromer complex (also called SNX-BAR retromer) is a pentamer containing the CSC and a heterodimeric membrane-deforming subcomplex formed between SNX1 or SNX2 and SNX5 or SNX6 (also called SNX-BAR subcomplex); the respective CSC and SNX-BAR subcomplexes associate with low affinity. The CSC associates with SNX3 to form a SNX3-retromer complex. The CSC associates with SNX27, the WASH complex and the SNX-BAR subcomplex to form the SNX27-retromer complex. Interacts with VPS29, VPS35, SNX1, SNX2, SNX5, SNX6, SNX3, SNX27, RAB7A, ECPAS, EHD1, WASHC5, SORL1.

It is found in the cytoplasm. Its subcellular location is the endosome membrane. The protein resides in the early endosome. Its function is as follows. Acts as a component of the retromer cargo-selective complex (CSC). The CSC is believed to be the core functional component of retromer or respective retromer complex variants acting to prevent missorting of selected transmembrane cargo proteins into the lysosomal degradation pathway. The recruitment of the CSC to the endosomal membrane involves RAB7A and SNX3. The SNX-BAR retromer mediates retrograde transport of cargo proteins from endosomes to the trans-Golgi network (TGN) and is involved in endosome-to-plasma membrane transport for cargo protein recycling. The SNX3-retromer mediates the retrograde endosome-to-TGN transport of WLS distinct from the SNX-BAR retromer pathway. The SNX27-retromer is believed to be involved in endosome-to-plasma membrane trafficking and recycling of a broad spectrum of cargo proteins. The CSC seems to act as recruitment hub for other proteins, such as the WASH complex and TBC1D5. Required for retrograde transport of lysosomal enzyme receptor IGF2R. Required to regulate transcytosis of the polymeric immunoglobulin receptor (pIgR-pIgA). Required for the endosomal localization of WASHC2A (indicative for the WASH complex). Required for the endosomal localization of TBC1D5. Mediates retromer cargo recognition of SORL1 and is involved in trafficking of SORL1 implicated in sorting and processing of APP. Involved in retromer-independent lysosomal sorting of F2R. Involved in recycling of ADRB2. Enhances the affinity of SNX27 for PDZ-binding motifs in cargo proteins. In Homo sapiens (Human), this protein is Vacuolar protein sorting-associated protein 26A.